The primary structure comprises 1901 residues: A-kinase anchor protein 11 (1901 aa).

A phosphoserine mark is found at Ser18, Ser422, Ser433, Ser444, and Ser448. The tract at residues 407-443 (ALPANVRKPTPRKPESPYGNLCDAPDSPRPVKASRED) is disordered. 2 disordered regions span residues 843–864 (NPGN…SSSK) and 971–993 (LPVS…DSQN). 2 positions are modified to phosphothreonine: Thr981 and Thr1100. The segment at 1131–1153 (EFAPATPPSTPHNSSVGSLSENE) is disordered. Polar residues predominate over residues 1141–1153 (PHNSSVGSLSENE). A phosphoserine mark is found at Ser1171, Ser1176, Ser1177, Ser1242, and Ser1337. Thr1485 is modified (phosphothreonine). Ser1580 is subject to Phosphoserine. A PKA-RII subunit binding domain region spans residues 1650-1663 (LAEKIVAEAIEKAE). The interval 1708–1805 (KEIEDFQSTE…HEDEVEGLGQ (98 aa)) is disordered. Over residues 1713–1740 (FQSTESVSSQQMNLSIGDDSTGSWSNLS) the composition is skewed to polar residues. Residues 1747–1756 (DESSSFHHLS) are compositionally biased toward basic and acidic residues. The segment covering 1757-1772 (ESNGNSSSWSSLGLEG) has biased composition (low complexity). Acidic residues predominate over residues 1787-1801 (DGPDDKDEEHEDEVE).

This sequence belongs to the AKAP110 family. Expressed in heart, brain, lung, liver, kidney, testis and ovary. Weakly expressed in skeletal muscle, pancreas and spleen.

It localises to the cytoplasm. It is found in the cytoskeleton. The protein localises to the microtubule organizing center. The protein resides in the centrosome. Binds to type II regulatory subunits of protein kinase A and anchors/targets them. In Homo sapiens (Human), this protein is A-kinase anchor protein 11 (AKAP11).